The primary structure comprises 245 residues: 1-(5-phosphoribosyl)-5-[(5-phosphoribosylamino)methylideneamino] imidazole-4-carboxamide isomerase (245 aa).

Aspartate 7 acts as the Proton acceptor in catalysis. The Proton donor role is filled by aspartate 129.

It belongs to the HisA/HisF family.

Its subcellular location is the cytoplasm. It catalyses the reaction 1-(5-phospho-beta-D-ribosyl)-5-[(5-phospho-beta-D-ribosylamino)methylideneamino]imidazole-4-carboxamide = 5-[(5-phospho-1-deoxy-D-ribulos-1-ylimino)methylamino]-1-(5-phospho-beta-D-ribosyl)imidazole-4-carboxamide. It participates in amino-acid biosynthesis; L-histidine biosynthesis; L-histidine from 5-phospho-alpha-D-ribose 1-diphosphate: step 4/9. In Aliivibrio salmonicida (strain LFI1238) (Vibrio salmonicida (strain LFI1238)), this protein is 1-(5-phosphoribosyl)-5-[(5-phosphoribosylamino)methylideneamino] imidazole-4-carboxamide isomerase.